The following is a 458-amino-acid chain: Ribosomal protein uS12 methylthiotransferase RimO (458 aa).

The region spanning 6–116 (PKVGFVSLGC…VMEAVHAALP (111 aa)) is the MTTase N-terminal domain. [4Fe-4S] cluster is bound by residues Cys15, Cys51, Cys80, Cys147, Cys151, and Cys154. The 239-residue stretch at 133–371 (LTPRHYAYLK…AKQAQISALR (239 aa)) folds into the Radical SAM core domain. The 69-residue stretch at 373 to 441 (ESKIGSVQQC…EHDLFGDALP (69 aa)) folds into the TRAM domain.

It belongs to the methylthiotransferase family. RimO subfamily. Requires [4Fe-4S] cluster as cofactor.

The protein resides in the cytoplasm. It carries out the reaction L-aspartate(89)-[ribosomal protein uS12]-hydrogen + (sulfur carrier)-SH + AH2 + 2 S-adenosyl-L-methionine = 3-methylsulfanyl-L-aspartate(89)-[ribosomal protein uS12]-hydrogen + (sulfur carrier)-H + 5'-deoxyadenosine + L-methionine + A + S-adenosyl-L-homocysteine + 2 H(+). Its function is as follows. Catalyzes the methylthiolation of an aspartic acid residue of ribosomal protein uS12. The polypeptide is Ribosomal protein uS12 methylthiotransferase RimO (Xanthomonas euvesicatoria pv. vesicatoria (strain 85-10) (Xanthomonas campestris pv. vesicatoria)).